We begin with the raw amino-acid sequence, 350 residues long: Heme A synthase (350 aa).

8 helical membrane passes run 14-34 (VAIWLFLCSVMVILMVGIGGF), 95-115 (YVHRLVARLTGLVFVLPFIYF), 125-145 (VVIKLFVALLFGALQAFAGWY), 162-182 (LALHLLLALIIFALFSYQFFD), 202-222 (VGIILVLIMIQIIFGAFVAGL), 260-280 (VQFIHRALALLILTLVVILTV), 296-316 (IIQIILGVITLLLHIPIAIAI), and 317-337 (AHQVFSFILFGSSLYFLCYLR). His-264 is a binding site for heme. His-318 is a binding site for heme.

Belongs to the COX15/CtaA family. Type 2 subfamily. Interacts with CtaB. The cofactor is heme b.

The protein localises to the cell membrane. It catalyses the reaction Fe(II)-heme o + 2 A + H2O = Fe(II)-heme a + 2 AH2. It participates in porphyrin-containing compound metabolism; heme A biosynthesis; heme A from heme O: step 1/1. Functionally, catalyzes the conversion of heme O to heme A by two successive hydroxylations of the methyl group at C8. The first hydroxylation forms heme I, the second hydroxylation results in an unstable dihydroxymethyl group, which spontaneously dehydrates, resulting in the formyl group of heme A. This chain is Heme A synthase, found in Wolbachia pipientis wMel.